A 234-amino-acid polypeptide reads, in one-letter code: DNA repair protein RecO (234 aa).

It belongs to the RecO family.

Involved in DNA repair and RecF pathway recombination. The protein is DNA repair protein RecO of Coxiella burnetii (strain RSA 331 / Henzerling II).